The chain runs to 174 residues: Fimbria A protein (174 aa).

Positions 1-22 (MKLNKIMLATVLAFGVSSLANA) are cleaved as a signal peptide. Cysteines 41 and 80 form a disulfide.

The protein belongs to the fimbrial protein family.

Its subcellular location is the fimbrium. Major structural component of mannose-resistant fimbriae of Serratia marcescens. The polypeptide is Fimbria A protein (smfA) (Serratia marcescens).